Here is a 77-residue protein sequence, read N- to C-terminus: UPF0401 protein ECP_3853 (77 aa).

This sequence belongs to the UPF0401 family.

The protein is UPF0401 protein ECP_3853 of Escherichia coli O6:K15:H31 (strain 536 / UPEC).